Reading from the N-terminus, the 623-residue chain is MYHLDNDSGVSTFALAPVKSTQRLWFTEGGHGNAISYPGADWFNMVQAELFSILDDAGIQPDKGRLNQISLAIRKLSEGKVEDFSQQLKQADGYKYIGRCKSVAELRTIRPTENGQRILVDAYYEGSTAGGGEFVADLQDLITPDDGGTCFVVPNNGGRWKRLFSSSLQDTDFGVIGGVADDTTNLNAFLDALRTYKVKGYFTSRHYKTSAALNIAGVDIEGVLAGYKNKHGTRITGNGNHNIFEQMGGELQHITYSLKNFALSGGIVGLKMTYAVNAVVENVFIDNVERAFLLGDSQFVGPIWCSLKNCRGEGRISGLEIDGNKWANANMFETCFFKGDEFAGSITAKGGIGAVSNHFVNTEFAGKGVGVKLGKNKSTAFDNCYFESEGPSLLIEDSTADLALNNATFGSLTENNKTGKTSFIHHSLGTCNMSISSGYIYLAGNNQNNLAFIESDKPESLVVNMATPVKREIYTATGFKLFKNPDLPNKNSRVHYTSGYVCEFSSQNKNAELGNGDLTAYYNLNNSRCAVGLNLKIGSSTTKGTGQWQFRLPFQASGIGKYYLGQAIAIKADGSKLMTGVARIVGGSNQVVAYFNNVNPADATRPFEWTEGDRLDISIEYEI.

To phage Mu protein S.

This Haemophilus influenzae (strain ATCC 51907 / DSM 11121 / KW20 / Rd) protein is Mu-like prophage FluMu defective tail fiber protein.